A 154-amino-acid polypeptide reads, in one-letter code: Ribonuclease H (154 aa).

The 142-residue stretch at 5-146 (EQNIVYLYCD…ADELANRGID (142 aa)) folds into the RNase H type-1 domain. Positions 14, 52, 74, and 138 each coordinate Mg(2+).

This sequence belongs to the RNase H family. In terms of assembly, monomer. The cofactor is Mg(2+).

It localises to the cytoplasm. It catalyses the reaction Endonucleolytic cleavage to 5'-phosphomonoester.. In terms of biological role, endonuclease that specifically degrades the RNA of RNA-DNA hybrids. The chain is Ribonuclease H from Coxiella burnetii (strain RSA 331 / Henzerling II).